Consider the following 449-residue polypeptide: Signal recognition particle protein (449 aa).

Residues 109–116 (GLQGGGKT), 191–195 (DTAGR), and 249–252 (SRID) contribute to the GTP site.

It belongs to the GTP-binding SRP family. SRP54 subfamily. Part of the signal recognition particle protein translocation system, which is composed of SRP and FtsY. SRP is a ribonucleoprotein composed of Ffh and a 4.5S RNA molecule.

It is found in the cytoplasm. It carries out the reaction GTP + H2O = GDP + phosphate + H(+). In terms of biological role, involved in targeting and insertion of nascent membrane proteins into the cytoplasmic membrane. Binds to the hydrophobic signal sequence of the ribosome-nascent chain (RNC) as it emerges from the ribosomes. The SRP-RNC complex is then targeted to the cytoplasmic membrane where it interacts with the SRP receptor FtsY. Interaction with FtsY leads to the transfer of the RNC complex to the Sec translocase for insertion into the membrane, the hydrolysis of GTP by both Ffh and FtsY, and the dissociation of the SRP-FtsY complex into the individual components. The chain is Signal recognition particle protein from Rickettsia typhi (strain ATCC VR-144 / Wilmington).